The following is a 362-amino-acid chain: Serine/threonine-protein kinase SRK2D (362 aa).

In terms of domain architecture, Protein kinase spans Tyr23–Phe279. ATP contacts are provided by residues Ile29–Ala37 and Lys52. Asp142 acts as the Proton acceptor in catalysis.

This sequence belongs to the protein kinase superfamily. Ser/Thr protein kinase family. Interacts with ABI1. Interacts with I-2, TOPP1 and TOPP2. Interacts with FREE1 (via C-terminus). In terms of tissue distribution, expressed in seeds, seedlings, roots (especially in tips), stems, leaves, shoots, flowers and siliques.

It catalyses the reaction L-seryl-[protein] + ATP = O-phospho-L-seryl-[protein] + ADP + H(+). The catalysed reaction is L-threonyl-[protein] + ATP = O-phospho-L-threonyl-[protein] + ADP + H(+). Together with SRK2I, key component and activator of the abscisic acid (ABA) signaling pathway that regulates numerous ABA responses, such as seed germination, Pro accumulation, root growth inhibition, dormancy and seedling growth, and, to a lesser extent, stomatal closure. In response to ABA, phosphorylates the ESCRT-I complex component FREE1, which is required for ABA-induced FREE1 nuclear import. The chain is Serine/threonine-protein kinase SRK2D (SRK2D) from Arabidopsis thaliana (Mouse-ear cress).